We begin with the raw amino-acid sequence, 1029 residues long: Chitin synthase 3 (1029 aa).

The tract at residues Met-1–Asp-29 is disordered. The N-linked (GlcNAc...) asparagine glycan is linked to Asn-37. Positions Ala-46–Ser-71 are enriched in low complexity. 2 disordered regions span residues Ala-46–Pro-105 and Leu-168–Ser-209. The span at Ser-76 to Ser-91 shows a compositional bias: polar residues. A compositionally biased stretch (basic and acidic residues) spans Ala-191–Asp-202. N-linked (GlcNAc...) asparagine glycosylation is found at Asn-401, Asn-514, Asn-527, and Asn-689. A run of 7 helical transmembrane segments spans residues Phe-723 to Phe-743, Ile-760 to Ile-780, Ala-796 to Leu-816, Ala-830 to Ala-850, Phe-860 to Cys-880, Val-963 to Ala-983, and Val-998 to Ser-1018.

This sequence belongs to the chitin synthase family. Class I subfamily.

The protein resides in the cell membrane. The protein localises to the cytoplasmic vesicle membrane. It carries out the reaction [(1-&gt;4)-N-acetyl-beta-D-glucosaminyl](n) + UDP-N-acetyl-alpha-D-glucosamine = [(1-&gt;4)-N-acetyl-beta-D-glucosaminyl](n+1) + UDP + H(+). In terms of biological role, polymerizes chitin, a structural polymer of the cell wall and septum, by transferring the sugar moiety of UDP-GlcNAc to the non-reducing end of the growing chitin polymer. The chain is Chitin synthase 3 from Mycosarcoma maydis (Corn smut fungus).